Here is a 331-residue protein sequence, read N- to C-terminus: Phosphoribosylformylglycinamidine cyclo-ligase (331 aa).

It belongs to the AIR synthase family.

It is found in the cytoplasm. It catalyses the reaction 2-formamido-N(1)-(5-O-phospho-beta-D-ribosyl)acetamidine + ATP = 5-amino-1-(5-phospho-beta-D-ribosyl)imidazole + ADP + phosphate + H(+). Its pathway is purine metabolism; IMP biosynthesis via de novo pathway; 5-amino-1-(5-phospho-D-ribosyl)imidazole from N(2)-formyl-N(1)-(5-phospho-D-ribosyl)glycinamide: step 2/2. The polypeptide is Phosphoribosylformylglycinamidine cyclo-ligase (Clostridium novyi (strain NT)).